We begin with the raw amino-acid sequence, 177 residues long: Calcineurin subunit B (177 aa).

EF-hand domains lie at 25 to 60 (KEIK…AVNP), 62 to 92 (VKRV…FNAQ), 94 to 129 (DKQR…MVGN), and 135 to 170 (QLQQ…QDLE). Ca(2+) is bound by residues Asp38, Asp40, Asn42, Thr44, Glu49, Asp70, Asn72, Asp74, Ser76, Glu81, Asp107, Asp109, Asp111, Tyr113, Glu118, Asp148, Asp150, Asp152, Lys154, and Glu159.

Belongs to the calcineurin regulatory subunit family. In terms of assembly, composed of a catalytic subunit (A) and a regulatory subunit (B).

Its function is as follows. Regulatory subunit of calcineurin, a calcium-dependent, calmodulin stimulated protein phosphatase. Confers calcium sensitivity. The protein is Calcineurin subunit B (CNB1) of Naegleria gruberi (Amoeba).